The chain runs to 245 residues: DNA polymerase sliding clamp (245 aa).

This sequence belongs to the PCNA family. Homotrimer. The subunits circularize to form a toroid; DNA passes through its center. Replication factor C (RFC) is required to load the toroid on the DNA.

In terms of biological role, sliding clamp subunit that acts as a moving platform for DNA processing. Responsible for tethering the catalytic subunit of DNA polymerase and other proteins to DNA during high-speed replication. This chain is DNA polymerase sliding clamp, found in Methanosarcina acetivorans (strain ATCC 35395 / DSM 2834 / JCM 12185 / C2A).